The sequence spans 220 residues: MMDEKELYEKWKRTVEMLKAEGIIKSEKVERAFLKCPRYLFVEDRYKKYAHVDEPLPIPAGQTISAPHMVAIMLEIADLKPGMNVLEVGTGSGWNAALIAEIVKGDVYSIERIPELVEFAKRNLERAGVKNVHVILGDGSKGFPPKSPYDAIIVTAGAPEIPKPLVEQLKPGGKLIIPVGSYHLWQELLEVIKREDGSIKIKNHGGVAFVPLIGEHGWRE.

Ser-65 is a catalytic residue.

Belongs to the methyltransferase superfamily. L-isoaspartyl/D-aspartyl protein methyltransferase family.

It is found in the cytoplasm. The enzyme catalyses [protein]-L-isoaspartate + S-adenosyl-L-methionine = [protein]-L-isoaspartate alpha-methyl ester + S-adenosyl-L-homocysteine. Catalyzes the methyl esterification of L-isoaspartyl residues in peptides and proteins that result from spontaneous decomposition of normal L-aspartyl and L-asparaginyl residues. It plays a role in the repair and/or degradation of damaged proteins. The chain is Protein-L-isoaspartate O-methyltransferase (pcm) from Pyrococcus horikoshii (strain ATCC 700860 / DSM 12428 / JCM 9974 / NBRC 100139 / OT-3).